The following is a 343-amino-acid chain: Mitochondrial distribution and morphology protein 34 (343 aa).

The region spanning 1–196 (MSFVFPSWST…LPGIIHRLSQ (196 aa)) is the SMP-LTD domain. Disordered regions lie at residues 227–255 (EVEE…IGPG) and 300–325 (GAGT…KAKR). Low complexity predominate over residues 306–317 (SGRASLASSSVG).

Belongs to the MDM34 family. In terms of assembly, component of the ER-mitochondria encounter structure (ERMES) or MDM complex, composed of MMM1, MDM10, MDM12 and MDM34.

The protein localises to the mitochondrion outer membrane. Functionally, component of the ERMES/MDM complex, which serves as a molecular tether to connect the endoplasmic reticulum (ER) and mitochondria. Components of this complex are involved in the control of mitochondrial shape and protein biogenesis, and function in nonvesicular lipid trafficking between the ER and mitochondria. MDM34 is required for the interaction of the ER-resident membrane protein MMM1 and the outer mitochondrial membrane-resident beta-barrel protein MDM10. The protein is Mitochondrial distribution and morphology protein 34 of Cryptococcus neoformans var. neoformans serotype D (strain B-3501A) (Filobasidiella neoformans).